The chain runs to 554 residues: MQTDIAIAQSAEILPITQIAEKAGLKPNEILPYGYDKAKIKLDPTISRKKDLGKLILVTSINPTPAGEGKSTVTVGLADALALAGKKTMIALREPSLGPVMGMKGGATGGGMSQVIPMADINLHFTGDFHALTAAHDTLAAVVDNSLQQGNPLNIDPRRIIWKRVLDINDRALRHITIGMGGPTSGVPREDGFDITVASELMAILTLSTDLMDLKARVARIVVGYTYDKVPVTVADLGVSGALAVLLKDAIMPNLVQTLAHTPAIIHGGPFANIAQGTNSILATKTALQLADYTVTEGGFGADLGGEKFLDVKVPILGKTPDTIVVVATVRALKHHGGVALADLNNENLTALAAGLENLGQHLKAMGRYGVPVVVAINRFSADTDSEIQAIKDYAQAFGAAAYTTTVWAEGGAGAQDLAAAVIEAADQEADYTPLYQPENEAIDKLNAIVTTIYGGLGVELSATAQKQLMAFKAQGWDKLPIIMAKTQYSFSDDPKRLGAPKDFVIHVREFVPKLGAGFLVAMTGSILTMPGLPKHPAALDIDIDETGKITGLF.

64-71 (TPAGEGKS) serves as a coordination point for ATP.

This sequence belongs to the formate--tetrahydrofolate ligase family.

It carries out the reaction (6S)-5,6,7,8-tetrahydrofolate + formate + ATP = (6R)-10-formyltetrahydrofolate + ADP + phosphate. It functions in the pathway one-carbon metabolism; tetrahydrofolate interconversion. This Leuconostoc citreum (strain KM20) protein is Formate--tetrahydrofolate ligase.